The chain runs to 240 residues: Ditrans,polycis-undecaprenyl-diphosphate synthase ((2E,6E)-farnesyl-diphosphate specific) (240 aa).

Asp18 is a catalytic residue. A Mg(2+)-binding site is contributed by Asp18. Substrate-binding positions include 19–22 (GNGR), Trp23, Arg31, His35, and 63–65 (SSE). The Proton acceptor role is filled by Asn66. Residues Trp67, Arg69, Arg186, and 192–194 (RIS) each bind substrate. Glu205 is a binding site for Mg(2+).

Belongs to the UPP synthase family. In terms of assembly, homodimer. It depends on Mg(2+) as a cofactor.

It carries out the reaction 8 isopentenyl diphosphate + (2E,6E)-farnesyl diphosphate = di-trans,octa-cis-undecaprenyl diphosphate + 8 diphosphate. Catalyzes the sequential condensation of isopentenyl diphosphate (IPP) with (2E,6E)-farnesyl diphosphate (E,E-FPP) to yield (2Z,6Z,10Z,14Z,18Z,22Z,26Z,30Z,34E,38E)-undecaprenyl diphosphate (di-trans,octa-cis-UPP). UPP is the precursor of glycosyl carrier lipid in the biosynthesis of bacterial cell wall polysaccharide components such as peptidoglycan and lipopolysaccharide. This is Ditrans,polycis-undecaprenyl-diphosphate synthase ((2E,6E)-farnesyl-diphosphate specific) from Pasteurella multocida (strain Pm70).